Reading from the N-terminus, the 452-residue chain is UDP-N-acetylmuramoylalanine--D-glutamate ligase (452 aa).

119–125 contributes to the ATP binding site; sequence GSNGKTT.

This sequence belongs to the MurCDEF family.

It is found in the cytoplasm. The enzyme catalyses UDP-N-acetyl-alpha-D-muramoyl-L-alanine + D-glutamate + ATP = UDP-N-acetyl-alpha-D-muramoyl-L-alanyl-D-glutamate + ADP + phosphate + H(+). It participates in cell wall biogenesis; peptidoglycan biosynthesis. Cell wall formation. Catalyzes the addition of glutamate to the nucleotide precursor UDP-N-acetylmuramoyl-L-alanine (UMA). The protein is UDP-N-acetylmuramoylalanine--D-glutamate ligase of Streptococcus pyogenes serotype M28 (strain MGAS6180).